A 307-amino-acid polypeptide reads, in one-letter code: Protoheme IX farnesyltransferase (307 aa).

9 helical membrane passes run 31–51, 53–73, 103–123, 125–145, 153–173, 179–199, 223–243, 246–266, and 285–305; these read VTQLAVFCAIIGMFLATPGMV, WPVLIGGAAGIWLLAGAAFAI, TLVFSAILGGAGMWLLHVYAN, LTMWLTFATFLGYAVVYTILL, IVIGGLSGAMPPALGWAAVAG, AWFLVLIIFTWTPPHFWALAL, LLHILLYTLIMIAATLLPFVY, SGYIYLAAALALGAGFLAYAW, and ILYLSLLFAALLVDHYFKFVP.

The protein belongs to the UbiA prenyltransferase family. Protoheme IX farnesyltransferase subfamily.

The protein resides in the cell inner membrane. It carries out the reaction heme b + (2E,6E)-farnesyl diphosphate + H2O = Fe(II)-heme o + diphosphate. Its pathway is porphyrin-containing compound metabolism; heme O biosynthesis; heme O from protoheme: step 1/1. Converts heme B (protoheme IX) to heme O by substitution of the vinyl group on carbon 2 of heme B porphyrin ring with a hydroxyethyl farnesyl side group. The polypeptide is Protoheme IX farnesyltransferase (Cupriavidus taiwanensis (strain DSM 17343 / BCRC 17206 / CCUG 44338 / CIP 107171 / LMG 19424 / R1) (Ralstonia taiwanensis (strain LMG 19424))).